A 495-amino-acid polypeptide reads, in one-letter code: Meiosis-specific nuclear structural protein 1 (495 aa).

The segment at 1–315 (MASIRRTLSF…RLEEMLRQRE (315 aa)) is interaction with BBOF1. 2 coiled-coil regions span residues 61-215 (QDEQ…EKLM) and 245-361 (IEEF…QMAL). The segment at 172–199 (EESAAEDKRNQAKAQYSHDLEKQLEEQG) is disordered.

This sequence belongs to the MNS1 family. As to quaternary structure, able to form oligomers. Microtubule inner protein component of sperm flagellar doublet microtubules. Interacts with ODAD1. Interacts with BBOF1. Expressed in trachea multiciliated cells.

The protein localises to the nucleus. It is found in the cytoplasm. It localises to the cytoskeleton. The protein resides in the cilium axoneme. Its subcellular location is the flagellum axoneme. Its function is as follows. Microtubule inner protein (MIP) part of the dynein-decorated doublet microtubules (DMTs) in cilia axoneme, which is required for motile cilia beating. May play a role in the control of meiotic division and germ cell differentiation through regulation of pairing and recombination during meiosis. Required for sperm flagella assembly. May play a role in the assembly and function of the outer dynein arm-docking complex (ODA-DC). ODA-DC mediates outer dynein arms (ODA) binding onto the axonemal doublet microtubules. The protein is Meiosis-specific nuclear structural protein 1 (MNS1) of Bos taurus (Bovine).